The primary structure comprises 776 residues: Transferrin receptor protein 1 (776 aa).

Residues 1-70 (MDHARAALSN…QPQRNGKRLC (70 aa)) lie on the Cytoplasmic side of the membrane. Positions 19–22 (YTRF) match the Endocytosis signal motif. Residue Ser23 is modified to Phosphoserine. Residue Cys70 is the site of S-palmitoyl cysteine attachment. The chain crosses the membrane as a helical; Signal-anchor for type II membrane protein span at residues 71-91 (FLVIAAVLLLLIGFLIGYLSY). Residues 92–776 (RGRIELAARC…GDIWETDNEF (685 aa)) are Extracellular-facing. Residues 230–322 (SESGSVSGKP…GTGDPYTPGF (93 aa)) enclose the PA domain. Asn261, Asn326, and Asn391 each carry an N-linked (GlcNAc...) asparagine glycan. The ligand-binding stretch occupies residues 586–776 (KGDTLENLRK…GDIWETDNEF (191 aa)). A Cell attachment site motif is present at residues 662 to 664 (RGD). Residue Asn738 is glycosylated (N-linked (GlcNAc...) asparagine).

This sequence belongs to the peptidase M28 family. M28B subfamily. As to quaternary structure, homodimer; disulfide-linked. Binds one transferrin molecule per subunit. In terms of processing, stearoylated. Stearoylation does not affect iron uptake. N- and O-glycosylated, phosphorylated and palmitoylated.

Its subcellular location is the cell membrane. The protein resides in the melanosome. Its function is as follows. Cellular uptake of iron occurs via receptor-mediated endocytosis of ligand-occupied transferrin receptor into specialized endosomes. Endosomal acidification leads to iron release. The apotransferrin-receptor complex is then recycled to the cell surface with a return to neutral pH and the concomitant loss of affinity of apotransferrin for its receptor. Transferrin receptor is necessary for development of erythrocytes and the nervous system. Acts as a lipid sensor that regulates mitochondrial fusion by regulating activation of the JNK pathway. When dietary levels of stearate (C18:0) are low, promotes activation of the JNK pathway, resulting in HUWE1-mediated ubiquitination and subsequent degradation of the mitofusin MFN2 and inhibition of mitochondrial fusion. When dietary levels of stearate (C18:0) are high, TFRC stearoylation inhibits activation of the JNK pathway and thus degradation of the mitofusin MFN2. Mediates uptake of NICOL1 into fibroblasts where it may regulate extracellular matrix production. The polypeptide is Transferrin receptor protein 1 (TFRC) (Gallus gallus (Chicken)).